The primary structure comprises 156 residues: Transcriptional repressor NrdR (156 aa).

Residues 3-34 (CPSCQFNGTRVVDSRPVDDNKEIRRRRECESC) fold into a zinc finger. The ATP-cone domain maps to 49–139 (LVVVKKEGSR…VYRQFKDINV (91 aa)).

The protein belongs to the NrdR family. Zn(2+) is required as a cofactor.

Negatively regulates transcription of bacterial ribonucleotide reductase nrd genes and operons by binding to NrdR-boxes. In Lysinibacillus sphaericus (strain C3-41), this protein is Transcriptional repressor NrdR.